The chain runs to 129 residues: Succinate dehydrogenase assembly factor 3, mitochondrial (129 aa).

The protein belongs to the complex I LYR family. SDHAF3 subfamily. In terms of assembly, interacts with the iron-sulfur protein subunit within the SDH catalytic dimer.

Its subcellular location is the mitochondrion matrix. Functionally, plays an essential role in the assembly of succinate dehydrogenase (SDH), an enzyme complex (also referred to as respiratory complex II) that is a component of both the tricarboxylic acid (TCA) cycle and the mitochondrial electron transport chain, and which couples the oxidation of succinate to fumarate with the reduction of ubiquinone (coenzyme Q) to ubiquinol. Promotes maturation of the iron-sulfur protein subunit of the SDH catalytic dimer, protecting it from the deleterious effects of oxidants. May act together with SDHAF1. The polypeptide is Succinate dehydrogenase assembly factor 3, mitochondrial (Aspergillus fumigatus (strain ATCC MYA-4609 / CBS 101355 / FGSC A1100 / Af293) (Neosartorya fumigata)).